Reading from the N-terminus, the 206-residue chain is Protein-methionine-sulfoxide reductase heme-binding subunit MsrQ (206 aa).

The next 6 membrane-spanning stretches (helical) occupy residues 10-30 (VFIA…SAVL), 42-62 (LGLG…LQKL), 75-95 (LGLW…VFVL), 110-130 (PYII…VTSN), 147-167 (LVYV…RADL), and 169-189 (EWAI…PPVM).

This sequence belongs to the MsrQ family. In terms of assembly, heterodimer of a catalytic subunit (MsrP) and a heme-binding subunit (MsrQ). It depends on FMN as a cofactor. Heme b serves as cofactor.

It localises to the cell inner membrane. Its function is as follows. Part of the MsrPQ system that repairs oxidized periplasmic proteins containing methionine sulfoxide residues (Met-O), using respiratory chain electrons. Thus protects these proteins from oxidative-stress damage caused by reactive species of oxygen and chlorine generated by the host defense mechanisms. MsrPQ is essential for the maintenance of envelope integrity under bleach stress, rescuing a wide series of structurally unrelated periplasmic proteins from methionine oxidation. MsrQ provides electrons for reduction to the reductase catalytic subunit MsrP, using the quinone pool of the respiratory chain. In Pseudomonas fluorescens (strain SBW25), this protein is Protein-methionine-sulfoxide reductase heme-binding subunit MsrQ.